Reading from the N-terminus, the 426-residue chain is High affinity 3',5'-cyclic-AMP phosphodiesterase 7A (426 aa).

One can recognise a PDEase domain in the interval 80 to 402; the sequence is LDEDYNGQAK…ASWKGLQRQQ (323 aa). The active-site Proton donor is the His156. 4 residues coordinate a divalent metal cation: His160, His196, Asp197, and Asp306.

It belongs to the cyclic nucleotide phosphodiesterase family. PDE7 subfamily. Interacts with CBFA2T3. Requires a divalent metal cation as cofactor.

It is found in the cytoplasm. Its subcellular location is the cytosol. It carries out the reaction 3',5'-cyclic AMP + H2O = AMP + H(+). The protein operates within purine metabolism; 3',5'-cyclic AMP degradation; AMP from 3',5'-cyclic AMP: step 1/1. Its function is as follows. Hydrolyzes the second messenger cAMP, which is a key regulator of many important physiological processes. May have a role in muscle signal transduction. In Rattus norvegicus (Rat), this protein is High affinity 3',5'-cyclic-AMP phosphodiesterase 7A (Pde7a).